A 638-amino-acid chain; its full sequence is DNA gyrase subunit B (638 aa).

In terms of domain architecture, Toprim spans 423–537 (CEVYIVEGDS…KGHVYLAMPP (115 aa)). Positions 429, 502, and 504 each coordinate Mg(2+).

The protein belongs to the type II topoisomerase GyrB family. Heterotetramer, composed of two GyrA and two GyrB chains. In the heterotetramer, GyrA contains the active site tyrosine that forms a transient covalent intermediate with DNA, while GyrB binds cofactors and catalyzes ATP hydrolysis. The cofactor is Mg(2+). Mn(2+) is required as a cofactor. Ca(2+) serves as cofactor.

Its subcellular location is the cytoplasm. The catalysed reaction is ATP-dependent breakage, passage and rejoining of double-stranded DNA.. In terms of biological role, a type II topoisomerase that negatively supercoils closed circular double-stranded (ds) DNA in an ATP-dependent manner to modulate DNA topology and maintain chromosomes in an underwound state. Negative supercoiling favors strand separation, and DNA replication, transcription, recombination and repair, all of which involve strand separation. Also able to catalyze the interconversion of other topological isomers of dsDNA rings, including catenanes and knotted rings. Type II topoisomerases break and join 2 DNA strands simultaneously in an ATP-dependent manner. In Treponema denticola (strain ATCC 35405 / DSM 14222 / CIP 103919 / JCM 8153 / KCTC 15104), this protein is DNA gyrase subunit B.